The sequence spans 307 residues: Aspartate carbamoyltransferase catalytic subunit (307 aa).

Residues arginine 59 and threonine 60 each contribute to the carbamoyl phosphate site. Residue lysine 87 coordinates L-aspartate. The carbamoyl phosphate site is built by arginine 109, histidine 137, and glutamine 140. L-aspartate-binding residues include arginine 173 and arginine 223. Carbamoyl phosphate is bound by residues glycine 266 and proline 267.

This sequence belongs to the aspartate/ornithine carbamoyltransferase superfamily. ATCase family. Heterododecamer (2C3:3R2) of six catalytic PyrB chains organized as two trimers (C3), and six regulatory PyrI chains organized as three dimers (R2).

It catalyses the reaction carbamoyl phosphate + L-aspartate = N-carbamoyl-L-aspartate + phosphate + H(+). Its pathway is pyrimidine metabolism; UMP biosynthesis via de novo pathway; (S)-dihydroorotate from bicarbonate: step 2/3. In terms of biological role, catalyzes the condensation of carbamoyl phosphate and aspartate to form carbamoyl aspartate and inorganic phosphate, the committed step in the de novo pyrimidine nucleotide biosynthesis pathway. The protein is Aspartate carbamoyltransferase catalytic subunit of Helicobacter pylori (strain G27).